Reading from the N-terminus, the 440-residue chain is Ankyrin repeat and MYND domain-containing protein 2 (440 aa).

ANK repeat units follow at residues Asn-45–Cys-74, His-79–Val-108, and Lys-159–Leu-188. 8 residues coordinate Zn(2+): Cys-320, Cys-323, Cys-332, Cys-335, Cys-341, Cys-345, His-353, and Cys-357. Residues Cys-320–Cys-357 form an MYND-type zinc finger. Residues Ala-371–Asn-381 are compositionally biased toward basic and acidic residues. The disordered stretch occupies residues Ala-371–Glu-440.

Interacts with the retinal-specific guanylyl cyclase GC1.

Its subcellular location is the cell projection. The protein resides in the cilium. May be involved in the trafficking of signaling proteins to the cilia. The chain is Ankyrin repeat and MYND domain-containing protein 2 (Ankmy2) from Mus musculus (Mouse).